Here is a 34-residue protein sequence, read N- to C-terminus: Cytochrome b6-f complex subunit 8 (34 aa).

The chain crosses the membrane as a helical span at residues isoleucine 3–valine 23.

Belongs to the PetN family. As to quaternary structure, the 4 large subunits of the cytochrome b6-f complex are cytochrome b6, subunit IV (17 kDa polypeptide, PetD), cytochrome f and the Rieske protein, while the 4 small subunits are PetG, PetL, PetM and PetN. The complex functions as a dimer.

It is found in the cellular thylakoid membrane. Functionally, component of the cytochrome b6-f complex, which mediates electron transfer between photosystem II (PSII) and photosystem I (PSI), cyclic electron flow around PSI, and state transitions. The polypeptide is Cytochrome b6-f complex subunit 8 (Prochlorococcus marinus subsp. pastoris (strain CCMP1986 / NIES-2087 / MED4)).